We begin with the raw amino-acid sequence, 641 residues long: Homeobox protein ceh-38 (641 aa).

Polar residues-rich tracts occupy residues 1–14 (MESS…TNGT) and 28–38 (DPSSTFINNTG). Disordered regions lie at residues 1–79 (MESS…TSSA) and 129–244 (LHVD…GDRM). The segment covering 52 to 79 (TISPHPITPSASTSSATSATEEPATSSA) has biased composition (low complexity). Residues 131–140 (VDSRRRESHD) are compositionally biased toward basic and acidic residues. Polar residues-rich tracts occupy residues 167–183 (TPTN…SSLL) and 190–204 (NTIG…TFGS). The CUT DNA-binding region spans 308–394 (NAEIGDDIYI…TRLAILDMKT (87 aa)). Disordered regions lie at residues 398–428 (NRAS…PVSK), 485–508 (GGNI…VGDT), and 552–641 (FGVS…LAAN). The segment at residues 427-486 (SKRPRLVFTDIQKRTLQAIFKETQRPSREMQQTIAEHLRLDLSTVANFFMNARRRSRLGG) is a DNA-binding region (homeobox). A compositionally biased stretch (acidic residues) spans 571 to 604 (HEDDEELDELNDSELAYEEDVEIGDEEEEDEEQA). Residues 613 to 626 (KVEELEEKTVIKEE) are compositionally biased toward basic and acidic residues.

This sequence belongs to the CUT homeobox family. In terms of tissue distribution, expressed in the embryo. After gastrulation, expressed in almost all cells. During larval and adult stages, expressed in the dorsal and ventral nerve cord, head and tail neurons, pharynx, gut and head.

The protein localises to the nucleus. Its function is as follows. Probable DNA-binding regulatory protein involved in cell-fate specification. The sequence is that of Homeobox protein ceh-38 (ceh-38) from Caenorhabditis elegans.